Consider the following 217-residue polypeptide: Thiamine-phosphate synthase (217 aa).

4-amino-2-methyl-5-(diphosphooxymethyl)pyrimidine contacts are provided by residues 44-48 and Asn76; that span reads QYREK. Mg(2+) is bound by residues Asp77 and Asp96. A 4-amino-2-methyl-5-(diphosphooxymethyl)pyrimidine-binding site is contributed by Ser115. 141-143 lines the 2-[(2R,5Z)-2-carboxy-4-methylthiazol-5(2H)-ylidene]ethyl phosphate pocket; it reads TKT. Lys144 lines the 4-amino-2-methyl-5-(diphosphooxymethyl)pyrimidine pocket. 2-[(2R,5Z)-2-carboxy-4-methylthiazol-5(2H)-ylidene]ethyl phosphate-binding positions include Gly172 and 192–193; that span reads VS.

Belongs to the thiamine-phosphate synthase family. Mg(2+) is required as a cofactor.

It carries out the reaction 2-[(2R,5Z)-2-carboxy-4-methylthiazol-5(2H)-ylidene]ethyl phosphate + 4-amino-2-methyl-5-(diphosphooxymethyl)pyrimidine + 2 H(+) = thiamine phosphate + CO2 + diphosphate. The enzyme catalyses 2-(2-carboxy-4-methylthiazol-5-yl)ethyl phosphate + 4-amino-2-methyl-5-(diphosphooxymethyl)pyrimidine + 2 H(+) = thiamine phosphate + CO2 + diphosphate. The catalysed reaction is 4-methyl-5-(2-phosphooxyethyl)-thiazole + 4-amino-2-methyl-5-(diphosphooxymethyl)pyrimidine + H(+) = thiamine phosphate + diphosphate. The protein operates within cofactor biosynthesis; thiamine diphosphate biosynthesis; thiamine phosphate from 4-amino-2-methyl-5-diphosphomethylpyrimidine and 4-methyl-5-(2-phosphoethyl)-thiazole: step 1/1. Functionally, condenses 4-methyl-5-(beta-hydroxyethyl)thiazole monophosphate (THZ-P) and 2-methyl-4-amino-5-hydroxymethyl pyrimidine pyrophosphate (HMP-PP) to form thiamine monophosphate (TMP). This is Thiamine-phosphate synthase from Lawsonia intracellularis (strain PHE/MN1-00).